Reading from the N-terminus, the 160-residue chain is Surface-adhesin protein E (160 aa).

The N-terminal stretch at 1–15 is a signal peptide; it reads MKKIILTLSLGLLTA. C16 carries N-palmitoyl cysteine lipidation. C16 carries S-diacylglycerol cysteine lipidation. An interaction with laminin and plasminogen region spans residues 41–68; the sequence is IRLVKNVNYYIDSESIWVDNQEPQIVHF. An interaction with vitronectin and epithelial cells region spans residues 84–108; it reads PKRYARSVRQYKILNCANYHLTQVR.

As to quaternary structure, homodimer. Interacts with host vitronectin, laminin and plasminogen. Can interact with both immobilized and soluble vitronectin.

It localises to the cell outer membrane. The protein resides in the cell surface. Acts as a multifunctional adhesin involved in direct interactions with host epithelial cells and host proteins, including vitronectin, laminin and plasminogen. In addition, interaction with serum vitronectin plays an important role in bacterial serum resistance, and conversion of plasminogen to plasmin at the cell surface aids in immune evasion and contributes to bacterial virulence. Induces a pro-inflammatory epithelial cell response, leading to interleukin-8 (IL-8) secretion and up-regulation of ICAM1. This is Surface-adhesin protein E (pe) from Haemophilus influenzae (strain NTHi 3655).